A 272-amino-acid polypeptide reads, in one-letter code: tRNA pseudouridine synthase B (272 aa).

Catalysis depends on Asp38, which acts as the Nucleophile.

The protein belongs to the pseudouridine synthase TruB family. Type 1 subfamily.

The catalysed reaction is uridine(55) in tRNA = pseudouridine(55) in tRNA. Functionally, responsible for synthesis of pseudouridine from uracil-55 in the psi GC loop of transfer RNAs. The sequence is that of tRNA pseudouridine synthase B from Campylobacter jejuni subsp. jejuni serotype O:6 (strain 81116 / NCTC 11828).